Reading from the N-terminus, the 1011-residue chain is PE-PGRS family protein PE_PGRS30 (1011 aa).

A PE domain is found at 1-93; the sequence is MSFLLVEPDL…AAAYTGAEAA (93 aa). The interval 130 to 696 is PGRS domain; the sequence is SNAGGNGGPG…GGTGGTGGVL (567 aa). Residues 595–696 show a composition bias toward gly residues; it reads GGAGGTGGDH…GGTGGTGGVL (102 aa). The tract at residues 595–701 is disordered; sequence GGAGGTGGDH…TGGVLFGQSG (107 aa). The C-terminal domain stretch occupies residues 697 to 1011; sequence FGQSGSSGPP…PTQLAQAIAP (315 aa).

Belongs to the mycobacterial PE family. PGRS subfamily.

Its subcellular location is the secreted. It localises to the cell wall. The protein localises to the cell surface. In terms of biological role, mediates suppression of pro-inflammatory immune response in macrophages via modulation of host cytokine response. Required for full virulence. Involved in inhibition of phago-lysosome fusion. This chain is PE-PGRS family protein PE_PGRS30, found in Mycobacterium tuberculosis (strain ATCC 25618 / H37Rv).